The primary structure comprises 343 residues: tRNA N6-adenosine threonylcarbamoyltransferase (343 aa).

Residues His111 and His115 each coordinate Fe cation. Residues 134–138 (LVSGG), Asp167, Gly180, and Asn276 contribute to the substrate site. A Fe cation-binding site is contributed by Asp304.

Belongs to the KAE1 / TsaD family. Fe(2+) serves as cofactor.

The protein resides in the cytoplasm. It carries out the reaction L-threonylcarbamoyladenylate + adenosine(37) in tRNA = N(6)-L-threonylcarbamoyladenosine(37) in tRNA + AMP + H(+). Its function is as follows. Required for the formation of a threonylcarbamoyl group on adenosine at position 37 (t(6)A37) in tRNAs that read codons beginning with adenine. Is involved in the transfer of the threonylcarbamoyl moiety of threonylcarbamoyl-AMP (TC-AMP) to the N6 group of A37, together with TsaE and TsaB. TsaD likely plays a direct catalytic role in this reaction. This Hahella chejuensis (strain KCTC 2396) protein is tRNA N6-adenosine threonylcarbamoyltransferase.